The chain runs to 236 residues: MAKYKRVLLKLSGESLMGEKQYGIDEKRLAEYAAQIKEIHEQGVQIGIVIGGGNIFRGLSGANKGFDRVKGDQMGMLATVINSLALSSALVAAGVKARVLTAVRMEPIGEFYSKWKAIECMENGEIVIMSAGTGNPFFTTDTGSSLRGIEIEADVMLKGTRVDGIYTADPEKDPTATKFHDITYDEVLKRGLKVMDLTATCMCKENNLPIVVFDMDTVGNLKKVITGEEIGTLVHN.

Lys-10–Gly-13 is a binding site for ATP. A UMP-binding site is contributed by Gly-52. ATP contacts are provided by Gly-53 and Arg-57. UMP is bound by residues Asp-72 and Thr-133–Thr-140. ATP is bound by residues Thr-160, Tyr-166, and Asp-169.

Belongs to the UMP kinase family. Homohexamer.

It is found in the cytoplasm. The catalysed reaction is UMP + ATP = UDP + ADP. It functions in the pathway pyrimidine metabolism; CTP biosynthesis via de novo pathway; UDP from UMP (UMPK route): step 1/1. Its activity is regulated as follows. Inhibited by UTP. Catalyzes the reversible phosphorylation of UMP to UDP. The polypeptide is Uridylate kinase (Bacteroides fragilis (strain ATCC 25285 / DSM 2151 / CCUG 4856 / JCM 11019 / LMG 10263 / NCTC 9343 / Onslow / VPI 2553 / EN-2)).